Reading from the N-terminus, the 399-residue chain is Aspartate aminotransferase (399 aa).

L-aspartate contacts are provided by glycine 42 and asparagine 179. Lysine 240 carries the N6-(pyridoxal phosphate)lysine modification. L-aspartate is bound at residue arginine 372.

Belongs to the class-I pyridoxal-phosphate-dependent aminotransferase family. Homodimer. The cofactor is pyridoxal 5'-phosphate.

The protein resides in the cytoplasm. It catalyses the reaction L-aspartate + 2-oxoglutarate = oxaloacetate + L-glutamate. The chain is Aspartate aminotransferase (aspC) from Sulfurisphaera tokodaii (strain DSM 16993 / JCM 10545 / NBRC 100140 / 7) (Sulfolobus tokodaii).